A 76-amino-acid polypeptide reads, in one-letter code: Conotoxin PnMKLT1-1111 (76 aa).

The signal sequence occupies residues 1-22 (MKLTCMMIVAVLFLTAWTVVTA). Residues 23–50 (VPHSNKRLANLYLKARHEMKNPEASNVD) constitute a propeptide that is removed on maturation. Intrachain disulfides connect cysteine 53/cysteine 67, cysteine 60/cysteine 71, and cysteine 66/cysteine 75.

It belongs to the conotoxin O1 superfamily. In terms of tissue distribution, expressed by the venom duct.

It localises to the secreted. The chain is Conotoxin PnMKLT1-1111 from Conus pennaceus (Feathered cone).